The primary structure comprises 711 residues: Putative membrane protein IgaA homolog (711 aa).

Position 1 (M1) is a topological domain, periplasmic. The chain crosses the membrane as a helical span at residues 2-22 (STIVIFLAALLACSLLAGWLI). The Cytoplasmic portion of the chain corresponds to 23-204 (KVRSRRRQLP…YALSRPRGLR (182 aa)). The next 2 helical transmembrane spans lie at 205–225 (EALLIVASFLMFFFCLITPDV) and 226–246 (FVPWLAGGALLLLGAGLWGLF). The Cytoplasmic portion of the chain corresponds to 247-339 (APPAKSSLRE…KNFPLQHWLR (93 aa)). Residues 340–360 (STIIAAGSLLVLFMLLFWIPL) traverse the membrane as a helical segment. The Periplasmic portion of the chain corresponds to 361–655 (DMPLKFTLSW…IPDRSGLWRY (295 aa)). A helical membrane pass occupies residues 656–676 (LSTTLLLLTMLGSAIYNGVQA). The Cytoplasmic portion of the chain corresponds to 677–711 (WRRYQRHRTRMMEIQAYYESCLNPQLITPSESLIE).

The protein belongs to the IgaA family.

The protein localises to the cell inner membrane. This Escherichia coli (strain K12) protein is Putative membrane protein IgaA homolog (yrfF).